The following is a 312-amino-acid chain: Pantothenate kinase (312 aa).

97–104 (GSVAVGKS) lines the ATP pocket.

Belongs to the prokaryotic pantothenate kinase family.

It is found in the cytoplasm. It catalyses the reaction (R)-pantothenate + ATP = (R)-4'-phosphopantothenate + ADP + H(+). The protein operates within cofactor biosynthesis; coenzyme A biosynthesis; CoA from (R)-pantothenate: step 1/5. The chain is Pantothenate kinase from Mycobacterium bovis (strain BCG / Pasteur 1173P2).